The following is a 353-amino-acid chain: D-alanine--D-alanine ligase A (353 aa).

Residues 141–346 (KRLVNEAGLS…YPEIINRLVA (206 aa)) enclose the ATP-grasp domain. 169–224 (EQALGLPIFIKPARQGSSVGVHKVVTEADYQAAMSDGFTYDDKLLAEEFIQAREVE) contributes to the ATP binding site. Mg(2+)-binding residues include D300, E313, and N315.

It belongs to the D-alanine--D-alanine ligase family. Mg(2+) serves as cofactor. Mn(2+) is required as a cofactor.

The protein localises to the cytoplasm. It catalyses the reaction 2 D-alanine + ATP = D-alanyl-D-alanine + ADP + phosphate + H(+). Its pathway is cell wall biogenesis; peptidoglycan biosynthesis. Functionally, cell wall formation. This Brucella suis biovar 1 (strain 1330) protein is D-alanine--D-alanine ligase A.